Consider the following 277-residue polypeptide: Large ribosomal subunit protein uL2 (277 aa).

Residues Arg216–Gly277 form a disordered region.

Belongs to the universal ribosomal protein uL2 family. In terms of assembly, part of the 50S ribosomal subunit. Forms a bridge to the 30S subunit in the 70S ribosome.

Functionally, one of the primary rRNA binding proteins. Required for association of the 30S and 50S subunits to form the 70S ribosome, for tRNA binding and peptide bond formation. It has been suggested to have peptidyltransferase activity; this is somewhat controversial. Makes several contacts with the 16S rRNA in the 70S ribosome. This chain is Large ribosomal subunit protein uL2, found in Acidiphilium cryptum (strain JF-5).